We begin with the raw amino-acid sequence, 216 residues long: MQFVLFGPPGAGKGTQAKFLSEELNVPHISTGDILRENVKKGTALGLKAKSYMDKGELVPDNLLIDLIKDRLSQPDCRKGFLLDGFPRTIPQAEALDEILDDINKKLDGVINIDVGSGELIRRLSGRRICRSCGASYHLVFNPPKAKDLCDSCGGELYQRDDDKEVAIKNRLDVYVRQTQPVLEYYKKKNLLIDIDGEKEIDEVTADVKAAIRKLA.

10 to 15 (GAGKGT) provides a ligand contact to ATP. Positions 30–59 (STGDILRENVKKGTALGLKAKSYMDKGELV) are NMP. AMP contacts are provided by residues threonine 31, arginine 36, 57–59 (ELV), 85–88 (GFPR), and glutamine 92. An LID region spans residues 126–163 (GRRICRSCGASYHLVFNPPKAKDLCDSCGGELYQRDDD). Arginine 127 is a binding site for ATP. Zn(2+)-binding residues include cysteine 130 and cysteine 133. 136 to 137 (SY) is a binding site for ATP. Zn(2+) contacts are provided by cysteine 150 and cysteine 153. Residues arginine 160 and arginine 171 each contribute to the AMP site. Lysine 199 is a binding site for ATP.

This sequence belongs to the adenylate kinase family. As to quaternary structure, monomer.

It localises to the cytoplasm. The enzyme catalyses AMP + ATP = 2 ADP. The protein operates within purine metabolism; AMP biosynthesis via salvage pathway; AMP from ADP: step 1/1. In terms of biological role, catalyzes the reversible transfer of the terminal phosphate group between ATP and AMP. Plays an important role in cellular energy homeostasis and in adenine nucleotide metabolism. This Methanocella arvoryzae (strain DSM 22066 / NBRC 105507 / MRE50) protein is Adenylate kinase.